The following is a 507-amino-acid chain: Fatty acid resistance protein FarB (507 aa).

Helical transmembrane passes span 8–28, 52–72, 78–98, 109–129, 136–156, 164–184, 199–219, 233–253, 274–294, 303–323, 334–354, 363–383, 399–419, and 478–498; these read GAAL…EVLD, WVIT…GFLA, VKLF…CGIA, ILQG…LMAS, MLAL…GPIL, WHWG…AWIT, PTDY…QMML, IITL…WELG, IATS…PLVL, AWAG…SPLI, LLVT…TDFY, IWPQ…LTTI, LSNF…STLW, and IFLA…LAKP.

Belongs to the major facilitator superfamily. EmrB family. Probably part of a tripartite efflux system FarAB-MtrE, which is composed of an inner membrane transporter, FarB, a periplasmic membrane fusion protein, FarA, and an outer membrane component, MtrE.

The protein resides in the cell inner membrane. Functionally, mediates resistance to long-chained antibacterial fatty acids (FAs). Function is dependent on the MtrE outer membrane protein. This Neisseria gonorrhoeae protein is Fatty acid resistance protein FarB.